The following is a 125-amino-acid chain: Large ribosomal subunit protein bL12 (125 aa).

Homodimer. Part of the ribosomal stalk of the 50S ribosomal subunit. Forms a multimeric L10(L12)X complex, where L10 forms an elongated spine to which 2 to 4 L12 dimers bind in a sequential fashion. Binds GTP-bound translation factors. Post-translationally, two isoforms seem to exist. One is probably dimethylated on Lys-69 and monomethylated on Lys-86 while the other is probably acetylated or trimethylated on both Lys-86 and Lys-89.

In terms of biological role, forms part of the ribosomal stalk which helps the ribosome interact with GTP-bound translation factors. Is thus essential for accurate translation. The protein is Large ribosomal subunit protein bL12 of Rhodopseudomonas palustris (strain ATCC BAA-98 / CGA009).